The chain runs to 164 residues: Leucine-rich single-pass membrane protein 2 (164 aa).

A helical transmembrane segment spans residues 97–117 (GFLLLLALLVLTCLVLALLAV).

Its subcellular location is the membrane. The protein is Leucine-rich single-pass membrane protein 2 (LSMEM2) of Homo sapiens (Human).